The following is a 156-amino-acid chain: V-type sodium ATPase subunit K (156 aa).

The next 4 helical transmembrane spans lie at 11 to 31 (GMVF…IGSA), 60 to 80 (LLPG…FINL), 89 to 109 (GLNF…SGIA), and 132 to 152 (IIFA…SFLL).

The protein belongs to the V-ATPase proteolipid subunit family. Post-translationally, the N-terminus is blocked.

It is found in the cell membrane. Involved in ATP-driven sodium extrusion. In Enterococcus hirae (strain ATCC 9790 / DSM 20160 / JCM 8729 / LMG 6399 / NBRC 3181 / NCIMB 6459 / NCDO 1258 / NCTC 12367 / WDCM 00089 / R), this protein is V-type sodium ATPase subunit K (ntpK).